A 155-amino-acid polypeptide reads, in one-letter code: Small ribosomal subunit protein uS7c (155 aa).

This sequence belongs to the universal ribosomal protein uS7 family. In terms of assembly, part of the 30S ribosomal subunit.

The protein localises to the plastid. The protein resides in the chloroplast. Functionally, one of the primary rRNA binding proteins, it binds directly to 16S rRNA where it nucleates assembly of the head domain of the 30S subunit. The sequence is that of Small ribosomal subunit protein uS7c (rps7) from Saruma henryi (Upright wild ginger).